The chain runs to 510 residues: ATP synthase subunit alpha (510 aa).

169–176 lines the ATP pocket; it reads GDRQTGKT.

It belongs to the ATPase alpha/beta chains family. F-type ATPases have 2 components, CF(1) - the catalytic core - and CF(0) - the membrane proton channel. CF(1) has five subunits: alpha(3), beta(3), gamma(1), delta(1), epsilon(1). CF(0) has three main subunits: a(1), b(2) and c(9-12). The alpha and beta chains form an alternating ring which encloses part of the gamma chain. CF(1) is attached to CF(0) by a central stalk formed by the gamma and epsilon chains, while a peripheral stalk is formed by the delta and b chains.

The protein resides in the cell inner membrane. It carries out the reaction ATP + H2O + 4 H(+)(in) = ADP + phosphate + 5 H(+)(out). Its function is as follows. Produces ATP from ADP in the presence of a proton gradient across the membrane. The alpha chain is a regulatory subunit. The sequence is that of ATP synthase subunit alpha from Nitrobacter winogradskyi (strain ATCC 25391 / DSM 10237 / CIP 104748 / NCIMB 11846 / Nb-255).